The sequence spans 50 residues: U37-theraphotoxin-Cg1a (50 aa).

A signal peptide spans 1 to 19 (MRVLLIIAGLALLSVVCYT).

The protein belongs to the neurotoxin 10 (Hwtx-1) family. 67 (Jztx-67) subfamily. Expressed by the venom gland.

It is found in the secreted. The chain is U37-theraphotoxin-Cg1a from Chilobrachys guangxiensis (Chinese earth tiger tarantula).